Here is a 1349-residue protein sequence, read N- to C-terminus: Spike glycoprotein (1349 aa).

A signal peptide spans 1-13 (MFFILLITLPSVF). Topologically, residues 14–1293 (AVIGDLKCNT…GTYEYYVKWP (1280 aa)) are extracellular. The BetaCoV S1-NTD domain occupies 15-298 (VIGDLKCNTS…DFMSEIMCKT (284 aa)). 7 disulfides stabilise this stretch: C21–C165, C160–C193, C172–C252, C286–C296, C331–C356, C374–C427, and C386–C601. 3 N-linked (GlcNAc...) asparagine; by host glycosylation sites follow: N22, N59, and N133. Residue N198 is glycosylated (N-linked (GlcNAc...) asparagine; by host). The 275-residue stretch at 329 to 603 (PNCDIEAWLN…DVNSGTTCST (275 aa)) folds into the BetaCoV S1-CTD domain. 11 N-linked (GlcNAc...) asparagine; by host glycosylation sites follow: N437, N456, N512, N611, N635, N662, N682, N700, N725, N774, and N881. Fusion peptide regions lie at residues 900–921 (SAIEDLLFDKVKLSDVGFVQAY) and 919–939 (QAYNNCTGGAEIRDLICVQSY). A glycan (N-linked (GlcNAc...) asparagine; by host) is linked at N923. C924 and C935 are joined by a disulfide. The tract at residues 1000–1050 (QKLIASAFNNALDSIQEGFDATNSALVKIQAVVNANAEALNNLLQQLSNRF) is heptad repeat 1. Residues 1029–1073 (QAVVNANAEALNNLLQQLSNRFGAISASLQEILSRLDALEAKAQI) are a coiled coil. N-linked (GlcNAc...) asparagine; by host glycosylation is found at N1180, N1210, N1220, N1239, N1253, and N1274. Residues 1244–1282 (APDLSFDYINVTFLDLQDEMNRLQEAIKVLNHSYINLKD) are heptad repeat 2. Residues 1255-1283 (TFLDLQDEMNRLQEAIKVLNHSYINLKDI) are a coiled coil. The chain crosses the membrane as a helical span at residues 1294-1314 (WYVWLLICLAGVVMLVLLFFI). The Cytoplasmic segment spans residues 1315–1349 (CCCTGCGTSCFKKCGGCFDDYTGHQEFVIKTSHDD). The KxHxx signature appears at 1345-1349 (TSHDD).

It belongs to the betacoronaviruses spike protein family. In terms of assembly, homotrimer; each monomer consists of a S1 and a S2 subunit. The resulting peplomers protrude from the virus surface as spikes. Specific enzymatic cleavages in vivo yield mature proteins. The precursor is processed into S1 and S2 by host cell furin or another cellular protease to yield the mature S1 and S2 proteins. Additionally, a second cleavage leads to the release of a fusion peptide after viral attachment to host cell receptor. In terms of processing, the cytoplasmic Cys-rich domain is palmitoylated. Spike glycoprotein is digested within host endosomes.

It is found in the virion membrane. Its subcellular location is the host endoplasmic reticulum-Golgi intermediate compartment membrane. It localises to the host cell membrane. Attaches the virion to the cell membrane by interacting with host receptor, initiating the infection. Its function is as follows. Mediates fusion of the virion and cellular membranes by acting as a class I viral fusion protein. Under the current model, the protein has at least three conformational states: pre-fusion native state, pre-hairpin intermediate state, and post-fusion hairpin state. During viral and target cell membrane fusion, the coiled coil regions (heptad repeats) assume a trimer-of-hairpins structure, positioning the fusion peptide in close proximity to the C-terminal region of the ectodomain. The formation of this structure appears to drive apposition and subsequent fusion of viral and target cell membranes. Functionally, acts as a viral fusion peptide which is unmasked following S2 cleavage occurring upon virus endocytosis. The sequence is that of Spike glycoprotein from Porcine hemagglutinating encephalomyelitis virus (strain IAF-404) (HEV).